A 366-amino-acid polypeptide reads, in one-letter code: Inactive PGL/p-HBAD biosynthesis glycosyltransferase Mb2982c (366 aa).

Disordered stretches follow at residues 1 to 23 (MEET…PNAA) and 295 to 366 (DGDR…HGGP). Positions 295–311 (DGDRGHRWPEPPEERAG) are enriched in basic and acidic residues.

The protein belongs to the UDP-glycosyltransferase family.

The chain is Inactive PGL/p-HBAD biosynthesis glycosyltransferase Mb2982c from Mycobacterium bovis (strain ATCC BAA-935 / AF2122/97).